Reading from the N-terminus, the 200-residue chain is 3-isopropylmalate dehydratase small subunit (200 aa).

This sequence belongs to the LeuD family. LeuD type 1 subfamily. In terms of assembly, heterodimer of LeuC and LeuD.

It catalyses the reaction (2R,3S)-3-isopropylmalate = (2S)-2-isopropylmalate. It participates in amino-acid biosynthesis; L-leucine biosynthesis; L-leucine from 3-methyl-2-oxobutanoate: step 2/4. Catalyzes the isomerization between 2-isopropylmalate and 3-isopropylmalate, via the formation of 2-isopropylmaleate. This Vibrio cholerae serotype O1 (strain ATCC 39541 / Classical Ogawa 395 / O395) protein is 3-isopropylmalate dehydratase small subunit.